The chain runs to 178 residues: ATP synthase subunit delta (178 aa).

It belongs to the ATPase delta chain family. F-type ATPases have 2 components, F(1) - the catalytic core - and F(0) - the membrane proton channel. F(1) has five subunits: alpha(3), beta(3), gamma(1), delta(1), epsilon(1). F(0) has three main subunits: a(1), b(2) and c(10-14). The alpha and beta chains form an alternating ring which encloses part of the gamma chain. F(1) is attached to F(0) by a central stalk formed by the gamma and epsilon chains, while a peripheral stalk is formed by the delta and b chains.

It localises to the cell inner membrane. Its function is as follows. F(1)F(0) ATP synthase produces ATP from ADP in the presence of a proton or sodium gradient. F-type ATPases consist of two structural domains, F(1) containing the extramembraneous catalytic core and F(0) containing the membrane proton channel, linked together by a central stalk and a peripheral stalk. During catalysis, ATP synthesis in the catalytic domain of F(1) is coupled via a rotary mechanism of the central stalk subunits to proton translocation. Functionally, this protein is part of the stalk that links CF(0) to CF(1). It either transmits conformational changes from CF(0) to CF(1) or is implicated in proton conduction. The polypeptide is ATP synthase subunit delta (Pseudomonas putida (strain W619)).